The primary structure comprises 462 residues: L-seryl-tRNA(Sec) selenium transferase (462 aa).

An N6-(pyridoxal phosphate)lysine modification is found at Lys293.

It belongs to the SelA family. The cofactor is pyridoxal 5'-phosphate.

The protein resides in the cytoplasm. The enzyme catalyses L-seryl-tRNA(Sec) + selenophosphate + H(+) = L-selenocysteinyl-tRNA(Sec) + phosphate. It functions in the pathway aminoacyl-tRNA biosynthesis; selenocysteinyl-tRNA(Sec) biosynthesis; selenocysteinyl-tRNA(Sec) from L-seryl-tRNA(Sec) (bacterial route): step 1/1. Functionally, converts seryl-tRNA(Sec) to selenocysteinyl-tRNA(Sec) required for selenoprotein biosynthesis. This Clostridium botulinum (strain Loch Maree / Type A3) protein is L-seryl-tRNA(Sec) selenium transferase.